We begin with the raw amino-acid sequence, 98 residues long: NADH-ubiquinone oxidoreductase chain 4L (98 aa).

Helical transmembrane passes span 1-21, 29-49, and 61-81; these read MPLIYMNITLAFAISLLGMLI, SLLCLEGMMLSLFIMSTLMAL, and VVLLVFAACEAAVGLALLVSI.

It belongs to the complex I subunit 4L family. In terms of assembly, core subunit of respiratory chain NADH dehydrogenase (Complex I) which is composed of 45 different subunits.

The protein localises to the mitochondrion inner membrane. It catalyses the reaction a ubiquinone + NADH + 5 H(+)(in) = a ubiquinol + NAD(+) + 4 H(+)(out). Core subunit of the mitochondrial membrane respiratory chain NADH dehydrogenase (Complex I) which catalyzes electron transfer from NADH through the respiratory chain, using ubiquinone as an electron acceptor. Part of the enzyme membrane arm which is embedded in the lipid bilayer and involved in proton translocation. This Hylobates lar (Lar gibbon) protein is NADH-ubiquinone oxidoreductase chain 4L (MT-ND4L).